An 833-amino-acid polypeptide reads, in one-letter code: MutS protein homolog 5 (833 aa).

The segment at 1–45 is disordered; it reads MAFRATPGRTPPGPGPRSGIPSASFPSPQPPMAGPGGIEEEDEEE. ATP is bound at residue 591–598; the sequence is GPNSSGKS.

It belongs to the DNA mismatch repair MutS family. As to quaternary structure, heterooligomer of MSH4 and MSH5. Interacts with HJURP. Interacts with REDIC1.

Involved in DNA mismatch repair and meiotic recombination processes. Facilitates crossovers between homologs during meiosis. The sequence is that of MutS protein homolog 5 (Msh5) from Mus musculus (Mouse).